The primary structure comprises 166 residues: Interferon gamma (166 aa).

An N-terminal signal peptide occupies residues 1 to 23; the sequence is MKYTSYILAFQLCIILGSSSCYS. Q24 is modified (pyrrolidone carboxylic acid). N-linked (GlcNAc...) asparagine glycosylation is found at N39, N44, and N106.

The protein belongs to the type II (or gamma) interferon family. In terms of assembly, homodimer. In terms of tissue distribution, released primarily from activated T lymphocytes.

Its subcellular location is the secreted. Produced by lymphocytes activated by specific antigens or mitogens. IFN-gamma, in addition to having antiviral activity, has important immunoregulatory functions. It is a potent activator of macrophages, it has antiproliferative effects on transformed cells and it can potentiate the antiviral and antitumor effects of the type I interferons. The chain is Interferon gamma (IFNG) from Marmota monax (Woodchuck).